The following is a 501-amino-acid chain: Orsellinic acid/F9775 biosynthesis cluster protein D (501 aa).

A disordered region spans residues 137-189 (EVTPTTEDEDDEENESENDEEEGDVDLEEQEDDNGGRQSTTVTTSPGPSAPSV). Acidic residues predominate over residues 142–169 (TEDEDDEENESENDEEEGDVDLEEQEDD). Polar residues predominate over residues 172–183 (GRQSTTVTTSPG).

Part of the gene cluster that mediates the biosynthesis of orsellinic acid, as well as of the cathepsin K inhibitors F9775 A and F9775 B. The non-reducing polyketide synthase orsA produces orsellinic acid by condensing acetyl-CoA with 3 malonyl-CoA units. Further modifications by the decarboxylase orsB and the tyrosinase-like protein orsC lead to the production of F9775 A and F9775 B. The functions of orsD and orsE remain unclear since only orsB and orsC are required to convert orsellinic acid into F9775 A and F9775 B. This Emericella nidulans (strain FGSC A4 / ATCC 38163 / CBS 112.46 / NRRL 194 / M139) (Aspergillus nidulans) protein is Orsellinic acid/F9775 biosynthesis cluster protein D.